Here is a 425-residue protein sequence, read N- to C-terminus: Glutamate-1-semialdehyde 2,1-aminomutase (425 aa).

Residue Lys-265 is modified to N6-(pyridoxal phosphate)lysine.

The protein belongs to the class-III pyridoxal-phosphate-dependent aminotransferase family. HemL subfamily. As to quaternary structure, homodimer. Pyridoxal 5'-phosphate serves as cofactor.

Its subcellular location is the cytoplasm. It catalyses the reaction (S)-4-amino-5-oxopentanoate = 5-aminolevulinate. Its pathway is porphyrin-containing compound metabolism; protoporphyrin-IX biosynthesis; 5-aminolevulinate from L-glutamyl-tRNA(Glu): step 2/2. This chain is Glutamate-1-semialdehyde 2,1-aminomutase, found in Chromobacterium violaceum (strain ATCC 12472 / DSM 30191 / JCM 1249 / CCUG 213 / NBRC 12614 / NCIMB 9131 / NCTC 9757 / MK).